A 501-amino-acid chain; its full sequence is NADH-quinone oxidoreductase subunit M (501 aa).

The next 14 helical transmembrane spans lie at 1–21 (MLLSLLVIIPFLSGIFSFFSF), 30–50 (WIALTGMGLTLLTVIRIWFFE), 86–106 (FSIVMLFLTLFLGIIAILCSW), 115–134 (FFYLNIMLVLMGTIGVFIAF), 139–156 (FFFFWEIILIPMYFLISL), 174–194 (FFIYTQISGLIMLASILLLVL), 222–242 (IIMLGFFLAFIIKMPIVPFHG), 252–272 (PYCGAVDIIGALLKTAPYGLL), 286–306 (FAPIAIFLGFLSMFYGAWVAF), 314–331 (LIAYSSISHMGLMLIAIY), 341–363 (LIIQILSNSISTSALFILSGQIY), 374–394 (MGGLWTNIYWIPGFSLFFALS), 420–440 (LVSIISTIGIIFSSIYSLNMI), and 459–479 (IKEFWISIVLIFALIFLGLIP).

The protein belongs to the complex I subunit 4 family. Composed of 13 different subunits. Subunits NuoA, H, J, K, L, M, N constitute the membrane sector of the complex.

The protein resides in the cell membrane. It catalyses the reaction a quinone + NADH + 5 H(+)(in) = a quinol + NAD(+) + 4 H(+)(out). Its function is as follows. NDH-1 shuttles electrons from NADH, via FMN and iron-sulfur (Fe-S) centers, to quinones in the respiratory chain. Couples the redox reaction to proton translocation (for every two electrons transferred, four hydrogen ions are translocated across the cytoplasmic membrane), and thus conserves the redox energy in a proton gradient. The sequence is that of NADH-quinone oxidoreductase subunit M (nuoM) from Buchnera aphidicola subsp. Schizaphis graminum (strain Sg).